The chain runs to 312 residues: Olfactory receptor 2L3 (312 aa).

At 1–24 (MENYNQTSTDFILLGFFPPSRIGL) the chain is on the extracellular side. Asn-5 carries N-linked (GlcNAc...) asparagine glycosylation. A helical membrane pass occupies residues 25–48 (FLFILIVFIFLMALIGNLSMILLI). Residues 49 to 56 (FLDTHLHT) are Cytoplasmic-facing. Residues 57–78 (PMYFLLSQLSLIDLNYISTIVP) form a helical membrane-spanning segment. Residues 79-99 (KMASDFLSGNKSISFTGCGIQ) are Extracellular-facing. Residue Asn-88 is glycosylated (N-linked (GlcNAc...) asparagine). An intrachain disulfide couples Cys-96 to Cys-188. Residues 100–119 (SFFFSALGGAEALLLASMAY) form a helical membrane-spanning segment. Topologically, residues 120-138 (DRYIAICFPLHYPIRMSKR) are cytoplasmic. Residues 139 to 157 (MCVLMITGSWIIGSINACA) form a helical membrane-spanning segment. Over 158–194 (HTVYVLHIPYCQSRAINHFFCDVPAMVTLACMDTWVY) the chain is Extracellular. Residues 195 to 218 (EGTVFLSTTIFLVFPFIAISCSYG) form a helical membrane-spanning segment. The Cytoplasmic portion of the chain corresponds to 219-235 (RVLLAVYHMKSAEGRKK). A helical transmembrane segment spans residues 236-258 (AYLTCSTHLTVVTFYYAPFVYTY). Residues 259 to 271 (LRPRSLRSPTEDK) lie on the Extracellular side of the membrane. A helical membrane pass occupies residues 272–291 (VLAVFYTTLTPMLNPIIYSL). At 292–312 (RNKEVMGALTRVSQRICSGKM) the chain is on the cytoplasmic side.

The protein belongs to the G-protein coupled receptor 1 family.

Its subcellular location is the cell membrane. Its function is as follows. Odorant receptor. The chain is Olfactory receptor 2L3 (OR2L3) from Homo sapiens (Human).